The primary structure comprises 216 residues: Putative ripening-related protein 4 (216 aa).

An N-terminal signal peptide occupies residues 1–25; sequence MAANVKVLVVLALLQLMSLHAVVHG.

Belongs to the kiwellin family.

It localises to the secreted. In Oryza sativa subsp. japonica (Rice), this protein is Putative ripening-related protein 4.